Here is a 1091-residue protein sequence, read N- to C-terminus: Multiple epidermal growth factor-like domains protein 11 (1091 aa).

Positions 1-18 are cleaved as a signal peptide; the sequence is MAPSAVGLLVFLLQAALA. The Extracellular portion of the chain corresponds to 19–847; that stretch reads LNPEDPNVCS…SPALGAERHS (829 aa). Positions 23 to 100 constitute an EMI domain; the sequence is DPNVCSHWES…YYENGDFCIP (78 aa). Cystine bridges form between C27/C88, C53/C62, C87/C98, C102/C117, C119/C128, C145/C153, C147/C160, C162/C171, C184/C196, C190/C203, C205/C214, C227/C239, C233/C246, and C248/C257. 9 consecutive EGF-like domains span residues 94 to 129, 142 to 172, 180 to 215, 223 to 258, 266 to 301, 314 to 344, 398 to 433, 441 to 476, and 484 to 519; these read NGDFCIPLCTEECMHGRCVSPDTCHCEPGWGGPDCS, SNRCQCQNGALCNPITGACVCAPGFRGWRCE, HGKGCQLLCQCHHGASCDPRTGECLCAPGYTGVYCE, HGAHCELRCPCQNGGTCHHITGECACPPGWTGAVCA, FGQNCSQDCPCHHGGQCDHVTGQCHCTAGYMGDRCQ, SQRCDCHNGGQCSPATGACECEPGYKGPSCQ, YGNGCQLPCTCQNGADCHSITGSCTCAPGFMGEVCA, YGPNCSSVCSCSNGGTCSPVDGSCTCREGWQGLDCS, and WGLNCNETCICANGAACSPFDGSCACTPGWLGDSCE. N-linked (GlcNAc...) asparagine glycosylation is present at N269. Disulfide bonds link C270-C282, C276-C289, C291-C300, C317-C325, C319-C332, C334-C343, C402-C414, C408-C421, C423-C432, C445-C457, C451-C464, C466-C475, C488-C500, C494-C507, and C509-C518. N-linked (GlcNAc...) asparagine glycosylation is present at N530. 6 consecutive EGF-like domains span residues 570–605, 613–650, 658–693, 706–736, 749–779, and 787–822; these read WGPNCSVSCSCENGGSCSPEDGSCECAPGFRGPLCQ, YGHGCAQPCPLCVHSRGPCHHISGICECLPGFSGALCN, FGQDCAQLCSCANNGTCSPIDGSCQCFPGWIGKDCS, FHTCSCHNGASCSAEDGACHCTPGWTGLFCT, GHICQCQNGASCDHITGKCTCRTGFSGRHCE, and FGYGCQQLCECMNNATCDHVTGTCYCSPGFKGIRCD. Intrachain disulfides connect C574–C586, C580–C593, C595–C604, C617–C631, C621–C638, C640–C649, C662–C674, C668–C681, C683–C692, C709–C717, C711–C724, C726–C735, C752–C760, C754–C767, C769–C778, C791–C803, C797–C810, and C812–C821. The chain crosses the membrane as a helical span at residues 848-868; the sequence is VGAVTGIVLLLFLVVVLLGLF. The Cytoplasmic portion of the chain corresponds to 869-1091; that stretch reads AWRRRRQKEK…NIYEVGRCLT (223 aa).

This sequence belongs to the MEGF family. As to quaternary structure, homomer. Does not interact with MEGF10.

It localises to the cell membrane. Its subcellular location is the basolateral cell membrane. Its function is as follows. May regulate the mosaic spacing of specific neuron subtypes in the retina through homotypic retinal neuron repulsion. Mosaics provide a mechanism to distribute each cell type evenly across the retina, ensuring that all parts of the visual field have access to a full set of processing elements. The polypeptide is Multiple epidermal growth factor-like domains protein 11 (Megf11) (Mus musculus (Mouse)).